The sequence spans 603 residues: MRLSQMLFVTLRDDPADAEIPSHKLLVRAGFIRRLGSGLYAYLPLIWRVLEKVKRIVQEEMNRTGAQECLLPQLQPSELWKMSGRWDTYTESEGIMFALRDRLERELGLGPTHEEVITAIAKEMIRSYRQLPVNLYQIQTKFRDEIRPRFGLMRGREFIMKDAYSFHSDEASLKATYGAMDQAYRNIFSRCGLDFRPVDADSGAIGGSGSQEFMVLADAGEDEILYTEDGLYSANVEKAVSLAPDAKPSPFSGYKKQSAPNTATIAKMCQCLDCDASNVVKNVLYQAVYNSGKAVLVLVSIRGDQEVNEVKLTNELTKLAPHYESTNILSLTVPDEKEQQKWAAKPLPLGYISPGISDDYIATNKQVADKFLRLVDQTAVDLTNFATGADAVDYHVTGANWSTDFTLPKLVVDVRKALAGDRPVHDPTGELKTARGIEVGHIFQLGTKYSQAMGATFTNEQGEEKPLVMGCYGIGVSRLAQAAVEQSYDKDGIIWPTAIAPYEVVIVVPNVGDEEQMQVAEQIYTEFQAAEVDVLLDDRNERAGVKFKDSELIGIPYRVVTGKSLKQGQLEVVKRADKSVQNLAIAAVVPTLTAWIKAEKKTS.

Belongs to the class-II aminoacyl-tRNA synthetase family. ProS type 1 subfamily. Homodimer.

Its subcellular location is the cytoplasm. The enzyme catalyses tRNA(Pro) + L-proline + ATP = L-prolyl-tRNA(Pro) + AMP + diphosphate. In terms of biological role, catalyzes the attachment of proline to tRNA(Pro) in a two-step reaction: proline is first activated by ATP to form Pro-AMP and then transferred to the acceptor end of tRNA(Pro). As ProRS can inadvertently accommodate and process non-cognate amino acids such as alanine and cysteine, to avoid such errors it has two additional distinct editing activities against alanine. One activity is designated as 'pretransfer' editing and involves the tRNA(Pro)-independent hydrolysis of activated Ala-AMP. The other activity is designated 'posttransfer' editing and involves deacylation of mischarged Ala-tRNA(Pro). The misacylated Cys-tRNA(Pro) is not edited by ProRS. The protein is Proline--tRNA ligase of Synechocystis sp. (strain ATCC 27184 / PCC 6803 / Kazusa).